The following is a 134-amino-acid chain: Complexin-2 (134 aa).

Residues M1–E114 form a disordered region. The segment covering D15–A85 has biased composition (basic and acidic residues). Residues D29–A84 are a coiled coil.

Belongs to the complexin/synaphin family. Binds to the SNARE core complex containing SNAP25, VAMP2 and STX1A. In terms of tissue distribution, nervous system. Present in electric organ (at protein level).

The protein localises to the cytoplasm. The protein resides in the cytosol. It localises to the presynapse. Its subcellular location is the nucleus. It is found in the perikaryon. Positively regulates a late step in synaptic vesicle exocytosis. The chain is Complexin-2 from Narke japonica (Japanese sleeper ray).